The sequence spans 304 residues: NAD kinase (304 aa).

The Proton acceptor role is filled by aspartate 77. NAD(+)-binding positions include aspartate 77–glycine 78, arginine 82, asparagine 151–glutamate 152, arginine 162, aspartate 181, and threonine 192–serine 197.

This sequence belongs to the NAD kinase family. It depends on a divalent metal cation as a cofactor.

Its subcellular location is the cytoplasm. The enzyme catalyses NAD(+) + ATP = ADP + NADP(+) + H(+). In terms of biological role, involved in the regulation of the intracellular balance of NAD and NADP, and is a key enzyme in the biosynthesis of NADP. Catalyzes specifically the phosphorylation on 2'-hydroxyl of the adenosine moiety of NAD to yield NADP. This chain is NAD kinase, found in Leifsonia xyli subsp. xyli (strain CTCB07).